Here is a 491-residue protein sequence, read N- to C-terminus: Aspartyl/glutamyl-tRNA(Asn/Gln) amidotransferase subunit B (491 aa).

The protein belongs to the GatB/GatE family. GatB subfamily. Heterotrimer of A, B and C subunits.

It catalyses the reaction L-glutamyl-tRNA(Gln) + L-glutamine + ATP + H2O = L-glutaminyl-tRNA(Gln) + L-glutamate + ADP + phosphate + H(+). The enzyme catalyses L-aspartyl-tRNA(Asn) + L-glutamine + ATP + H2O = L-asparaginyl-tRNA(Asn) + L-glutamate + ADP + phosphate + 2 H(+). Allows the formation of correctly charged Asn-tRNA(Asn) or Gln-tRNA(Gln) through the transamidation of misacylated Asp-tRNA(Asn) or Glu-tRNA(Gln) in organisms which lack either or both of asparaginyl-tRNA or glutaminyl-tRNA synthetases. The reaction takes place in the presence of glutamine and ATP through an activated phospho-Asp-tRNA(Asn) or phospho-Glu-tRNA(Gln). The polypeptide is Aspartyl/glutamyl-tRNA(Asn/Gln) amidotransferase subunit B (Burkholderia multivorans (strain ATCC 17616 / 249)).